Here is a 583-residue protein sequence, read N- to C-terminus: Aspartate--tRNA ligase (583 aa).

Residue E169 coordinates L-aspartate. The segment at 193 to 196 (QLFK) is aspartate. R215 provides a ligand contact to L-aspartate. ATP is bound by residues 215–217 (RDE) and Q224. H443 contacts L-aspartate. E477 provides a ligand contact to ATP. Position 484 (R484) interacts with L-aspartate. 529–532 (GIDR) contacts ATP.

Belongs to the class-II aminoacyl-tRNA synthetase family. Type 1 subfamily. In terms of assembly, homodimer.

Its subcellular location is the cytoplasm. It carries out the reaction tRNA(Asp) + L-aspartate + ATP = L-aspartyl-tRNA(Asp) + AMP + diphosphate. Its function is as follows. Catalyzes the attachment of L-aspartate to tRNA(Asp) in a two-step reaction: L-aspartate is first activated by ATP to form Asp-AMP and then transferred to the acceptor end of tRNA(Asp). The chain is Aspartate--tRNA ligase from Stenotrophomonas maltophilia (strain R551-3).